We begin with the raw amino-acid sequence, 414 residues long: MSKKIHGGSVVEMQGDEMTRIIWELIKEKLILPYVELDLHSYDLGIENRDATNDQVTKDAAEAIKKYNVGVKCATITPDEKRVEEFKLKQMWKSPNGTIRNILGGTVFREAIICKNIPRLVTGWVKPIIIGRHAYGDQYRATDFVVPGPGKVEITFTPKDGSQKVTYLVHSFEEGGGVAMGMYNQDKSIEDFAHSSFQMALSKGWPLYLSTKNTILKKYDGRFKDIFQEIYDKQYKSQFEAQKIWYEHRLIDDMVAQAMKSEGGFIWACKNYDGDVQSDSVAQGYGSLGMMTSVLICPDGKTVEAEAAHGTVTRHYRMHQKGQETSTNPIASIFAWSRGLAHRARLDNNTELSFFAKALEEVCIETIEAGFMTKDLAACIKGLPNVQRSDYLNTFEFMDKLGENLKAKLAQAKL.

At S2 the chain carries N-acetylserine. At Y42 the chain carries Phosphotyrosine. Residue 75–77 coordinates NADP(+); sequence TIT. T77 serves as a coordination point for substrate. An N6-acetyllysine modification is found at K81. Position 82 (R82) interacts with NADP(+). Residues 94 to 100 and R109 contribute to the substrate site; that span reads SPNGTIR. K126 is subject to N6-succinyllysine. Substrate contacts are provided by R132 and K212. N6-acetyllysine is present on residues K224, K233, and K243. D252 provides a ligand contact to Mn(2+). Position 260 (K260) interacts with NADP(+). Mn(2+)-binding residues include D275 and D279. 310–315 contacts NADP(+); sequence GTVTRH. An N6-acetyllysine modification is found at K321. Residue N328 coordinates NADP(+). S389 is modified (phosphoserine). Residue K400 is modified to N6-succinyllysine.

The protein belongs to the isocitrate and isopropylmalate dehydrogenases family. As to quaternary structure, homodimer. Mg(2+) serves as cofactor. It depends on Mn(2+) as a cofactor. Acetylation at Lys-374 dramatically reduces catalytic activity.

The protein localises to the cytoplasm. It localises to the cytosol. The enzyme catalyses D-threo-isocitrate + NADP(+) = 2-oxoglutarate + CO2 + NADPH. In terms of biological role, catalyzes the NADP(+)-dependent oxidative decarboxylation of isocitrate (D-threo-isocitrate) to 2-ketoglutarate (2-oxoglutarate), which is required by other enzymes such as the phytanoyl-CoA dioxygenase. Plays a critical role in the generation of NADPH, an important cofactor in many biosynthesis pathways. May act as a corneal epithelial crystallin and may be involved in maintaining corneal epithelial transparency. In Microtus mexicanus (Mexican vole), this protein is Isocitrate dehydrogenase [NADP] cytoplasmic (IDH1).